A 247-amino-acid chain; its full sequence is Ubiquinone biosynthesis O-methyltransferase (247 aa).

Residues Arg-40, Gly-71, Asp-92, and Met-135 each coordinate S-adenosyl-L-methionine.

It belongs to the methyltransferase superfamily. UbiG/COQ3 family.

It catalyses the reaction a 3-demethylubiquinol + S-adenosyl-L-methionine = a ubiquinol + S-adenosyl-L-homocysteine + H(+). The enzyme catalyses a 3-(all-trans-polyprenyl)benzene-1,2-diol + S-adenosyl-L-methionine = a 2-methoxy-6-(all-trans-polyprenyl)phenol + S-adenosyl-L-homocysteine + H(+). Its pathway is cofactor biosynthesis; ubiquinone biosynthesis. Functionally, O-methyltransferase that catalyzes the 2 O-methylation steps in the ubiquinone biosynthetic pathway. The protein is Ubiquinone biosynthesis O-methyltransferase of Ruegeria sp. (strain TM1040) (Silicibacter sp.).